Consider the following 351-residue polypeptide: Dihydroorotate dehydrogenase (quinone) (351 aa).

FMN-binding positions include 67 to 71 and Thr91; that span reads AGFDK. Lys71 contacts substrate. 116–120 serves as a coordination point for substrate; sequence NAMGF. 2 residues coordinate FMN: Asn145 and Asn178. Residue Asn178 participates in substrate binding. Ser181 serves as the catalytic Nucleophile. Asn183 lines the substrate pocket. FMN contacts are provided by Lys214 and Thr242. Residue 243 to 244 coordinates substrate; the sequence is NT. FMN is bound by residues Gly262, Gly291, and 312 to 313; that span reads YS.

Belongs to the dihydroorotate dehydrogenase family. Type 2 subfamily. As to quaternary structure, monomer. FMN serves as cofactor.

The protein localises to the cell membrane. The enzyme catalyses (S)-dihydroorotate + a quinone = orotate + a quinol. The protein operates within pyrimidine metabolism; UMP biosynthesis via de novo pathway; orotate from (S)-dihydroorotate (quinone route): step 1/1. Functionally, catalyzes the conversion of dihydroorotate to orotate with quinone as electron acceptor. The sequence is that of Dihydroorotate dehydrogenase (quinone) (pyrD) from Helicobacter pylori (strain ATCC 700392 / 26695) (Campylobacter pylori).